Consider the following 294-residue polypeptide: MQHFRDKIVVVKYGGNAMVDDDLKAAFAADMVFLRTVGAKPVVVHGGGPQISEMLNRVGLQGEFKGGFRVTTPEVMDIVRMVLFGQVGRDLVGLINSHGPYAVGTSGEDAGLFTAQKRMVNIDGVPTDIGLVGDIINVDASSLMDIIEAGRIPVVSTIAPGEDGQIYNINADTAAGALAAAIGAERLLVLTNVEGLYTDWPDKSSLVSKIKATELEAILPGLDSGMIPKMESCLNAVRGGVSAAHVIDGRIAHSVLLELLTMGGIGTMVLPDVFDRENYPEGTVFRKDDKDGEL.

Residues 47-48 (GG), arginine 69, and asparagine 168 contribute to the substrate site.

This sequence belongs to the acetylglutamate kinase family. ArgB subfamily.

The protein resides in the cytoplasm. The catalysed reaction is N-acetyl-L-glutamate + ATP = N-acetyl-L-glutamyl 5-phosphate + ADP. It participates in amino-acid biosynthesis; L-arginine biosynthesis; N(2)-acetyl-L-ornithine from L-glutamate: step 2/4. Its function is as follows. Catalyzes the ATP-dependent phosphorylation of N-acetyl-L-glutamate. The protein is Acetylglutamate kinase of Corynebacterium glutamicum (strain ATCC 13032 / DSM 20300 / JCM 1318 / BCRC 11384 / CCUG 27702 / LMG 3730 / NBRC 12168 / NCIMB 10025 / NRRL B-2784 / 534).